The primary structure comprises 270 residues: Monocyte to macrophage differentiation factor 2 (270 aa).

At M1–N38 the chain is on the cytoplasmic side. A helical membrane pass occupies residues C39–L59. Over S60–E65 the chain is Lumenal. Residues T66–F86 form a helical membrane-spanning segment. At H87–C102 the chain is on the cytoplasmic side. Residues L103 to L123 traverse the membrane as a helical segment. Residues N124 to A132 are Lumenal-facing. Residues S133–F153 traverse the membrane as a helical segment. Residues H154–K182 lie on the Cytoplasmic side of the membrane. The helical transmembrane segment at L183–M203 threads the bilayer. Topologically, residues P204–N205 are lumenal. Residues T206–F226 traverse the membrane as a helical segment. Over K227–P233 the chain is Cytoplasmic. The helical transmembrane segment at F234–I254 threads the bilayer. Residues W255 to K270 are Lumenal-facing.

This sequence belongs to the ADIPOR family. In terms of tissue distribution, shows restricted expression with highest levels in brain and testis.

Its subcellular location is the golgi apparatus membrane. The protein is Monocyte to macrophage differentiation factor 2 of Homo sapiens (Human).